The following is a 110-amino-acid chain: UPF0122 protein GWCH70_1086 (110 aa).

Belongs to the UPF0122 family.

Its function is as follows. Might take part in the signal recognition particle (SRP) pathway. This is inferred from the conservation of its genetic proximity to ftsY/ffh. May be a regulatory protein. The chain is UPF0122 protein GWCH70_1086 from Geobacillus sp. (strain WCH70).